A 455-amino-acid polypeptide reads, in one-letter code: MASKITGKGSFRGVPFLIEEEQGLDGGRRIVSHEYPLRDEGLTEDMGKRLRRYQVSCLVIGDDHLAQAEKLIDALEASGAGTLKHPYFGTIEVRVDDYRAKNSTNHQRVTRFDINFLPAIEKNAPEIAEDTAYSVLSEYQATLNSLSDEFAEMVQDVSGFIESMVDNPLFRLADTTAAFIENIFEGVANTVSGLTEVKDKALSIKNRLSNLLLTPKVLAYELQQLTRLNVRSAVNSQRQFVQHIVITDSISSALGDLTATKNEISKSTLDEMVTAKTNNVAETEILARQFKNLHEQEIFDALMNKTTFLLKRLVLSTLAVEYGKAISDAVTESVAQKTVTEETIATLIESKTDVQRYIAEVDEQLEAVILDNADAEQWTSYAALEQYRLTLMRDLQIRGERLANAIEVKLNDTYPAILLEYRHTGNSKTWKRLALRNGISHPLFCLGGTTLEVLQ.

The H-T-H motif DNA-binding region spans 368–387 (VILDNADAEQWTSYAALEQY).

The protein to phage Mu protein N.

The sequence is that of Mu-like prophage FluMu DNA circularization protein from Haemophilus influenzae (strain ATCC 51907 / DSM 11121 / KW20 / Rd).